The following is a 1286-amino-acid chain: MDKLNKKNKNKRIRGLQISIASAEEMRSWSHGEVKKPETINYKSLKPETDGLFDEAIFGPVKDFECACGKYKKIKHRGRTCEKCGVEITESIVRRERMGHIDLAVPVAHIWMTKELPSPSKISLVLDVSYKEVEEVVYFVNYIILNPGNSKNPVFKFKEVVDLSGKGSKSARIKLRKVLREIKDKHQADKHSIIYKRASDYYNKLKESHLPFSIDEVAKFIETHTGIRLGIGAEAILELLEGVDLQKEYDLINEELNSYSKDLKANKEDQKVKRALRRLETIKWLKESGIKASNMILKVIPVTPPDTRPIIQLDGARFTTSDINNFYRRIIIRNERLKKIIELRAPSVILNNEKRMLQEVVDALFDNASRKKPITAKDKRPLKSLTDRLKGKQGLFRQNLLGKRVDYSGRSVIVIGPELKMYEVGIPAPMILKLFKPFIIRELIMRFNEDGQEIKPIAPNIKIAEQMIAQKSERIWDIVDKVIKERPVLLNRAPTLHRLGIQAFEPKIVDGKAIRLHPLVTTAFNADFDGDQMAVHVPISKEAVAEARAIMLASWHILGPKDGKPVATPTQDMVLGNYYLTTEKRNEKGEGLIFSDFDQVILAYEAKQVSIHALIGLSTKCLTKKPFAKQGIVITTVGKAIMNSIMPEEMAYLNDGDNLLELDESNIVFAGEDFKQKLAKRPLYKPFGKKTLSKIIEILYKNFPLQKVPQVLDKIKEFGFKYSTLSSTTISVFDIPRYDNKQEYITKANEMIAKLKHMYQKGLLTDDERYTKVIRLWADVKDNVSRDIKEIITRPEYKENSIVVIADSGARGNISNFTQLFGMRGLMSKSYNYDQKIKSQVIRDTIEVPIKHSFIEGLTINEYFNSSYGARKGMTDIAMKTSKSGYMTRKLVDAAQEVIINDSDCNTNKGIVVSTITNSLDGGVVETLSERIVTRYTIDPIYDEKTKELLVDADTLITSELAEKIAKANVTKALIRSPIYCQSTKGLCQKCFGNDLTTNDLVQIGTAIGVIAAQSIGEPGTQLTMRTFHTGGTANEGNITQGFERLKQIFDVVSPKEWELATIAENEGVVESITSDATARIIRIKTRLEAEEYRVPFDAVISVNPKDVVYPGSKLTEGSIDIKHLLRVAGIETVRQYFLEEVQKVYRLQGIEIADKYVEVTIRQLTNKLQVIDVGDSDYFVGQTVDINKFRKEVTNMLIANKRPPVAINQVFGLDEAPAKTGSFLSAASFQDTKKILTDAAVKNQIDYLVGLKENVILGNLIPAGTGFMSSEEIIKAGEEALEKEY.

Zn(2+) contacts are provided by Cys66, Cys68, Cys81, and Cys84. Residues Asp527, Asp529, and Asp531 each contribute to the Mg(2+) site. 4 residues coordinate Zn(2+): Cys905, Cys981, Cys988, and Cys991.

The protein belongs to the RNA polymerase beta' chain family. In terms of assembly, the RNAP catalytic core consists of 2 alpha, 1 beta, 1 beta' and 1 omega subunit. When a sigma factor is associated with the core the holoenzyme is formed, which can initiate transcription. The cofactor is Mg(2+). Zn(2+) is required as a cofactor.

The enzyme catalyses RNA(n) + a ribonucleoside 5'-triphosphate = RNA(n+1) + diphosphate. In terms of biological role, DNA-dependent RNA polymerase catalyzes the transcription of DNA into RNA using the four ribonucleoside triphosphates as substrates. The sequence is that of DNA-directed RNA polymerase subunit beta' from Mycoplasmoides gallisepticum (strain R(low / passage 15 / clone 2)) (Mycoplasma gallisepticum).